Consider the following 336-residue polypeptide: F420-dependent glucose-6-phosphate dehydrogenase (336 aa).

Position 39 (D39) interacts with coenzyme F420-(gamma-Glu)n. The active-site Proton donor is the H40. Coenzyme F420-(gamma-Glu)n is bound by residues T76 and 107–108 (TG). E109 acts as the Proton acceptor in catalysis. Residues N112, 177-178 (GG), and 180-181 (AV) each bind coenzyme F420-(gamma-Glu)n. 4 residues coordinate substrate: T195, K198, K259, and R283.

The protein belongs to the F420-dependent glucose-6-phosphate dehydrogenase family. Homodimer.

It carries out the reaction oxidized coenzyme F420-(gamma-L-Glu)(n) + D-glucose 6-phosphate + H(+) = 6-phospho-D-glucono-1,5-lactone + reduced coenzyme F420-(gamma-L-Glu)(n). Catalyzes the coenzyme F420-dependent oxidation of glucose 6-phosphate (G6P) to 6-phosphogluconolactone. Appears to have a role in resistance to oxidative stress, via its consumption of G6P that serves as a source of reducing power to combat oxidative stress in mycobacteria. In Mycobacterium avium (strain 104), this protein is F420-dependent glucose-6-phosphate dehydrogenase.